The following is a 436-amino-acid chain: Cytokine receptor-like factor 3 (436 aa).

The stretch at 9-87 (LMQEAWESID…VSAIEQENIK (79 aa)) forms a coiled coil. One can recognise a Fibronectin type-III domain in the interval 177-270 (PPVQIEELIE…LQTSRTTLVP (94 aa)).

The protein belongs to the cytokine receptor-like factor 3 family.

It is found in the cytoplasm. May play a role in the negative regulation of cell cycle progression. The chain is Cytokine receptor-like factor 3 (crlf3) from Xenopus laevis (African clawed frog).